The chain runs to 66 residues: uncharacterized protein (66 aa).

Helical transmembrane passes span 6–26 and 39–59; these read KIIM…HFVG and VTFF…SILL.

Its subcellular location is the cell membrane. This is an uncharacterized protein from Bacillus subtilis (strain 168).